A 193-amino-acid polypeptide reads, in one-letter code: Holliday junction branch migration complex subunit RuvA (193 aa).

Residues 1–64 form a domain I region; that stretch reads MIGRIAGTLI…EDAHLLYGFG (64 aa). The interval 65–143 is domain II; the sequence is TAAERETFRQ…ADLGTVPGGP (79 aa). A flexible linker region spans residues 144 to 151; that stretch reads AVSDDAVD. A domain III region spans residues 151 to 193; it reads DVLNALLALGYSDKEAAQAIKQVPAGTGVSEGIKLALKALSKG.

It belongs to the RuvA family. In terms of assembly, homotetramer. Forms an RuvA(8)-RuvB(12)-Holliday junction (HJ) complex. HJ DNA is sandwiched between 2 RuvA tetramers; dsDNA enters through RuvA and exits via RuvB. An RuvB hexamer assembles on each DNA strand where it exits the tetramer. Each RuvB hexamer is contacted by two RuvA subunits (via domain III) on 2 adjacent RuvB subunits; this complex drives branch migration. In the full resolvosome a probable DNA-RuvA(4)-RuvB(12)-RuvC(2) complex forms which resolves the HJ.

Its subcellular location is the cytoplasm. Functionally, the RuvA-RuvB-RuvC complex processes Holliday junction (HJ) DNA during genetic recombination and DNA repair, while the RuvA-RuvB complex plays an important role in the rescue of blocked DNA replication forks via replication fork reversal (RFR). RuvA specifically binds to HJ cruciform DNA, conferring on it an open structure. The RuvB hexamer acts as an ATP-dependent pump, pulling dsDNA into and through the RuvAB complex. HJ branch migration allows RuvC to scan DNA until it finds its consensus sequence, where it cleaves and resolves the cruciform DNA. The polypeptide is Holliday junction branch migration complex subunit RuvA (Ralstonia nicotianae (strain ATCC BAA-1114 / GMI1000) (Ralstonia solanacearum)).